The primary structure comprises 175 residues: Succinate dehydrogenase assembly factor 2, mitochondrial (175 aa).

The tract at residues 42 to 71 (PFSDPELAHANNSLPSNSEEWPLPEPLDRT) is disordered. Positions 51-60 (ANNSLPSNSE) are enriched in polar residues.

Belongs to the SDHAF2 family. As to quaternary structure, interacts with the flavoprotein subunit within the SDH catalytic dimer.

Its subcellular location is the mitochondrion matrix. In terms of biological role, plays an essential role in the assembly of succinate dehydrogenase (SDH), an enzyme complex (also referred to as respiratory complex II) that is a component of both the tricarboxylic acid (TCA) cycle and the mitochondrial electron transport chain, and which couples the oxidation of succinate to fumarate with the reduction of ubiquinone (coenzyme Q) to ubiquinol. Required for flavinylation (covalent attachment of FAD) of the flavoprotein subunit of the SDH catalytic dimer. This chain is Succinate dehydrogenase assembly factor 2, mitochondrial, found in Cryptococcus neoformans var. neoformans serotype D (strain B-3501A) (Filobasidiella neoformans).